A 319-amino-acid polypeptide reads, in one-letter code: Transaldolase (319 aa).

The active-site Schiff-base intermediate with substrate is the K125.

The protein belongs to the transaldolase family. Type 1 subfamily. In terms of assembly, homodimer.

The protein localises to the cytoplasm. The catalysed reaction is D-sedoheptulose 7-phosphate + D-glyceraldehyde 3-phosphate = D-erythrose 4-phosphate + beta-D-fructose 6-phosphate. Its pathway is carbohydrate degradation; pentose phosphate pathway; D-glyceraldehyde 3-phosphate and beta-D-fructose 6-phosphate from D-ribose 5-phosphate and D-xylulose 5-phosphate (non-oxidative stage): step 2/3. In terms of biological role, transaldolase is important for the balance of metabolites in the pentose-phosphate pathway. The sequence is that of Transaldolase from Ralstonia pickettii (strain 12J).